Here is a 97-residue protein sequence, read N- to C-terminus: MMTGLWLSWSLNIQKPMFPLRLAQAMPISPAFSFKREFIMAKQAKAKKAVEKKVGDSKRAGYKRGSNSRINQTVEKIMRRARAVLRDDASRFGKQKA.

This is an uncharacterized protein from Escherichia coli (Bacteriophage T4).